The sequence spans 632 residues: tRNA uridine 5-carboxymethylaminomethyl modification enzyme MnmG (632 aa).

Residues Gly13–Gly18, Val125, and Ser180 contribute to the FAD site. Gly273–Phe287 serves as a coordination point for NAD(+). Gln370 is an FAD binding site.

Belongs to the MnmG family. As to quaternary structure, homodimer. Heterotetramer of two MnmE and two MnmG subunits. Requires FAD as cofactor.

The protein localises to the cytoplasm. Its function is as follows. NAD-binding protein involved in the addition of a carboxymethylaminomethyl (cmnm) group at the wobble position (U34) of certain tRNAs, forming tRNA-cmnm(5)s(2)U34. This chain is tRNA uridine 5-carboxymethylaminomethyl modification enzyme MnmG, found in Nitrosospira multiformis (strain ATCC 25196 / NCIMB 11849 / C 71).